Here is a 277-residue protein sequence, read N- to C-terminus: Large ribosomal subunit protein uL2 (277 aa).

Disordered stretches follow at residues 37–60 and 223–264; these read KNST…GHKH and VVMN…NKRT. Over residues 39-49 the composition is skewed to polar residues; that stretch reads STAGRNNNGHI. Residues 50 to 60 show a composition bias toward basic residues; sequence TTRHKGGGHKH. Over residues 229 to 244 the composition is skewed to basic and acidic residues; it reads DHPHGGGEGRTGEARE.

It belongs to the universal ribosomal protein uL2 family. In terms of assembly, part of the 50S ribosomal subunit. Forms a bridge to the 30S subunit in the 70S ribosome.

Functionally, one of the primary rRNA binding proteins. Required for association of the 30S and 50S subunits to form the 70S ribosome, for tRNA binding and peptide bond formation. It has been suggested to have peptidyltransferase activity; this is somewhat controversial. Makes several contacts with the 16S rRNA in the 70S ribosome. The sequence is that of Large ribosomal subunit protein uL2 from Neisseria gonorrhoeae (strain ATCC 700825 / FA 1090).